Here is a 142-residue protein sequence, read N- to C-terminus: Putative arsenate reductase (142 aa).

Belongs to the low molecular weight phosphotyrosine protein phosphatase family.

Functionally, reduces arsenate [As(V)] to arsenite [As(III)]. This is Putative arsenate reductase (arsC) from Halobacterium salinarum (strain ATCC 700922 / JCM 11081 / NRC-1) (Halobacterium halobium).